Here is a 244-residue protein sequence, read N- to C-terminus: Inactive chemokine-binding protein (244 aa).

The interval 1 to 79 (MHVPASLQQS…STSVEDVDPP (79 aa)) is disordered. Residues 37-53 (QDQTPTNDKICQSVTEI) are compositionally biased toward polar residues. A compositionally biased stretch (acidic residues) spans 54-77 (TESESDPDPEVESEDDSTSVEDVD).

The protein belongs to the orthopoxvirus OPG001 family.

It localises to the host cytoplasm. In terms of biological role, the protein is truncated in this vaccinal strain and presumably inactive, because the lack of signal peptide prevents the protein of being secreted. In the other strains inhibits host immune defense by binding to host chemokines. Binds host CC chemokines (beta chemokines) such as RANTES with high affinity, but not CXC or C chemokines (alpha and gamma chemokines). This chain is Inactive chemokine-binding protein (OPG001), found in Vaccinia virus (strain Copenhagen) (VACV).